The sequence spans 199 residues: Insertion sequence IS21-like putative ATP-binding protein (199 aa).

Residue 114 to 121 (GDSGTGKT) coordinates ATP.

It belongs to the IS21/IS1162 putative ATP-binding protein family.

This Bacteroides fragilis (strain YCH46) protein is Insertion sequence IS21-like putative ATP-binding protein (tnpB).